The chain runs to 883 residues: Translation initiation factor IF-2 (883 aa).

2 disordered regions span residues 52–102 and 115–297; these read KGRD…VNVE and VEAE…PTQP. Composition is skewed to basic and acidic residues over residues 115 to 179 and 204 to 237; these read VEAE…REAT and AAEK…ERAA. Positions 239 to 248 are enriched in low complexity; the sequence is KTGATAPAAK. Over residues 265-275 the composition is skewed to basic residues; the sequence is PGRRGGKKGGR. Residues 276–285 are compositionally biased toward low complexity; sequence RAASGGEAAK. One can recognise a tr-type G domain in the interval 383–550; sequence PRPPVVTVMG…AILLQAELME (168 aa). Residues 392-399 are G1; that stretch reads GHVDHGKT. GTP is bound at residue 392 to 399; it reads GHVDHGKT. A G2 region spans residues 417–421; that stretch reads GITQH. The G3 stretch occupies residues 438-441; the sequence is DTPG. GTP-binding positions include 438–442 and 492–495; these read DTPGH and NKID. The segment at 492-495 is G4; that stretch reads NKID. The tract at residues 528–530 is G5; the sequence is SAK.

The protein belongs to the TRAFAC class translation factor GTPase superfamily. Classic translation factor GTPase family. IF-2 subfamily.

It is found in the cytoplasm. One of the essential components for the initiation of protein synthesis. Protects formylmethionyl-tRNA from spontaneous hydrolysis and promotes its binding to the 30S ribosomal subunits. Also involved in the hydrolysis of GTP during the formation of the 70S ribosomal complex. This is Translation initiation factor IF-2 from Alkalilimnicola ehrlichii (strain ATCC BAA-1101 / DSM 17681 / MLHE-1).